The sequence spans 178 residues: Large ribosomal subunit protein uL6 (178 aa).

It belongs to the universal ribosomal protein uL6 family. As to quaternary structure, part of the 50S ribosomal subunit.

Its function is as follows. This protein binds to the 23S rRNA, and is important in its secondary structure. It is located near the subunit interface in the base of the L7/L12 stalk, and near the tRNA binding site of the peptidyltransferase center. The sequence is that of Large ribosomal subunit protein uL6 from Campylobacter curvus (strain 525.92).